Here is a 158-residue protein sequence, read N- to C-terminus: MLLTHLNEENQPKMVDIGDKETTERIALASGRISMNKEAYDAIVNHCVKKGPVLQTAIIAGIMGAKKTSELIPMCHSIMLNGVDIDILEEKETCSFKLYARVKTQAKTGVEMEALMSVSIGLLTIYDMVKAIDKSMTISGVMLEHKSGGKSGDYNAKK.

Substrate is bound by residues 74–76 (MCH) and 112–113 (ME). The active site involves Asp-127.

This sequence belongs to the MoaC family. Homohexamer; trimer of dimers.

The enzyme catalyses (8S)-3',8-cyclo-7,8-dihydroguanosine 5'-triphosphate = cyclic pyranopterin phosphate + diphosphate. The protein operates within cofactor biosynthesis; molybdopterin biosynthesis. In terms of biological role, catalyzes the conversion of (8S)-3',8-cyclo-7,8-dihydroguanosine 5'-triphosphate to cyclic pyranopterin monophosphate (cPMP). The protein is Cyclic pyranopterin monophosphate synthase of Helicobacter pylori (strain P12).